The primary structure comprises 4699 residues: Fat-like cadherin-related tumor suppressor homolog (4699 aa).

Residues 1 to 38 form the signal peptide; that stretch reads MFTMKIKKYVTPVKRKAFTILQWISLLCSLWLIPTVQS. Topologically, residues 39–4285 are extracellular; sequence KADEKHTATL…KNFSIEHISG (4247 aa). 34 Cadherin domains span residues 63–183, 184–291, 288–400, 401–507, 508–613, 614–716, 773–877, 878–980, 981–1088, 1089–1198, 1194–1299, 1300–1405, 1408–1506, 1507–1612, 1613–1717, 1718–1815, 1816–1932, 1933–2033, 2034–2140, 2141–2241, 2242–2341, 2342–2449, 2450–2551, 2552–2654, 2655–2763, 2764–2860, 2861–2967, 2968–3072, 3068–3169, 3170–3273, 3274–3378, 3379–3483, 3484–3588, and 3589–3696; these read SHSV…SPLF, YPTQ…APEI, APEI…IPIF, TQEI…DPIF, ENVN…RPQF, ERVN…SSIL, VNFP…RPVI, QKTL…APVF, GVQE…APEF, DDFV…KPVY, DKPV…SPEF, DQRV…APLI, KTSE…PPQF, AKDV…HPEF, TAKI…PPKF, PTNN…IPYF, VQNE…PPVF, NERE…NFAF, QRES…CPLF, VNMP…MPVF, EKQF…YPEI, ESDI…APCF, VEPS…SPLF, DQST…VPYF, LLKE…IPTF, EKSS…YPKF, DNTF…APVF, KLPI…KPRY, LKPR…MPIF, SMAQ…PPEF, SMRQ…SPTF, LQNL…APIF, SSSN…PPIV, and TPLE…VIRF. Asn-68 and Asn-159 each carry an N-linked (GlcNAc...) asparagine glycan. N-linked (GlcNAc...) asparagine glycosylation is present at Asn-367. 3 N-linked (GlcNAc...) asparagine glycosylation sites follow: Asn-782, Asn-846, and Asn-926. Asn-1109, Asn-1201, Asn-1315, Asn-1442, Asn-1476, and Asn-1514 each carry an N-linked (GlcNAc...) asparagine glycan. 19 cysteine pairs are disulfide-bonded: Cys-3807–Cys-3819, Cys-3814–Cys-3851, Cys-3853–Cys-3862, Cys-3869–Cys-3880, Cys-3874–Cys-3891, Cys-3893–Cys-3902, Cys-4071–Cys-4105, Cys-4117–Cys-4128, Cys-4122–Cys-4138, Cys-4140–Cys-4149, Cys-4156–Cys-4167, Cys-4161–Cys-4177, Cys-4179–Cys-4188, Cys-4194–Cys-4205, Cys-4199–Cys-4214, Cys-4216–Cys-4224, Cys-4231–Cys-4242, Cys-4236–Cys-4251, and Cys-4253–Cys-4262. An EGF-like 1 domain is found at 3865–3903; it reads TVNACSTDPCSPQRICMPSGSALGYQCVCPKGFSGTYCE. In terms of domain architecture, Laminin G-like spans 3921 to 4105; the sequence is AVSFGGKSYA…KRFTNVEFKC (185 aa). 4 consecutive EGF-like domains span residues 4113–4150, 4152–4189, 4190–4225, and 4227–4263; these read RLGI…KHCE, DLDP…KRCE, YGKF…PTCE, and DVDE…ASCG. A helical transmembrane segment spans residues 4286-4306; that stretch reads IISGVAVVLVIISCVLCCVVL. Residues 4307 to 4699 are Cytoplasmic-facing; the sequence is KRSSSSKRRN…EFLPQQQTNN (393 aa).

Localizes where basal actin filaments terminate.

It is found in the cell membrane. Its function is as follows. Required for the planar polarity of actin filament orientation at the basal side of ovarian follicle cells. Required for proper egg chamber shape and elongation of the egg chamber during oogenesis. Required for the correct planar polarization of Rab10 within the basal follicle cell epithelium and is therefore indirectly involved in the Rab10-dependent remodeling of the basal membrane during egg chamber elongation. This Drosophila melanogaster (Fruit fly) protein is Fat-like cadherin-related tumor suppressor homolog (kug).